The chain runs to 340 residues: Probable D,D-dipeptide transport system permease protein DdpB (340 aa).

The Periplasmic segment spans residues 1–11; it reads MTFWSILRQRC. The chain crosses the membrane as a helical span at residues 12 to 32; the sequence is WGLVLVVAGVCVITFIISHLI. The Cytoplasmic segment spans residues 33-104; that stretch reads PGDPARLLAG…IFFPATLELA (72 aa). Residues 97 to 327 enclose the ABC transmembrane type-1 domain; that stretch reads FPATLELAFG…LVNLVVDLLY (231 aa). Residues 105 to 125 form a helical membrane-spanning segment; the sequence is FGALLLALLIGIPLGILSAVW. The Periplasmic segment spans residues 126–135; the sequence is RNRWLDHLVR. The chain crosses the membrane as a helical span at residues 136 to 156; it reads IMAITGISTPAFWLGLGVIVL. Residues 157 to 199 are Cytoplasmic-facing; the sequence is FYGHLQILPGGGRLDDWLDPPTHVTGFYLLDALLEGNGEVFFN. A helical membrane pass occupies residues 200 to 220; that stretch reads ALQHLILPALTLAFVHLGIVA. Topologically, residues 221–246 are periplasmic; that stretch reads RQIRSAMLEQLSEDYIRTARASGLPG. A helical transmembrane segment spans residues 247-269; the sequence is WYIVLCYALPNALIPSITVLGLA. Topologically, residues 270–279 are cytoplasmic; the sequence is LGDLLYGAVL. A helical membrane pass occupies residues 280-300; the sequence is TETVFAWPGMGAWVVTSIQAL. Position 301 (Asp-301) is a topological domain, periplasmic. A helical membrane pass occupies residues 302-322; it reads FPAVMGFAVVVSFAYVLVNLV. The Cytoplasmic portion of the chain corresponds to 323-340; sequence VDLLYLWIDPRIGRGGGE.

This sequence belongs to the binding-protein-dependent transport system permease family. OppBC subfamily. The complex is composed of two ATP-binding proteins (DdpD and DdpF), two transmembrane proteins (DdpB and DdpC) and a solute-binding protein (DdpA).

Its subcellular location is the cell inner membrane. In terms of biological role, part of the ABC transporter complex DdpABCDF, which is probably involved in D,D-dipeptide transport. Probably responsible for the translocation of the substrate across the membrane. The sequence is that of Probable D,D-dipeptide transport system permease protein DdpB (ddpB) from Escherichia coli (strain K12).